The following is a 261-amino-acid chain: Carboxy-terminal domain RNA polymerase II polypeptide A small phosphatase 1 (261 aa).

At Met-1 the chain carries N-acetylmethionine. Residues 1 to 10 (MDSSAVITQI) are compositionally biased toward polar residues. The tract at residues 1–33 (MDSSAVITQISKEEARGPLRGKGDQKSAASQKP) is disordered. Residues 11–25 (SKEEARGPLRGKGDQ) show a composition bias toward basic and acidic residues. Residues 86–244 (QDSDKICVVI…HDLLPFFEQL (159 aa)) form the FCP1 homology domain. The active-site 4-aspartylphosphate intermediate is the Asp-96. The Mg(2+) site is built by Asp-96, Asp-98, and Asn-207. Asp-98 serves as the catalytic Proton donor.

In terms of assembly, monomer. Interacts with GTF2F1. Interacts with REST. Requires Mg(2+) as cofactor. As to expression, expression is restricted to non-neuronal tissues. Highest expression in skeletal muscle, spleen, lung and placenta.

Its subcellular location is the nucleus. It catalyses the reaction O-phospho-L-seryl-[protein] + H2O = L-seryl-[protein] + phosphate. The catalysed reaction is O-phospho-L-threonyl-[protein] + H2O = L-threonyl-[protein] + phosphate. With respect to regulation, stimulated by GTF2F1. Inhibited by beryllofluoride anions. Preferentially catalyzes the dephosphorylation of 'Ser-5' within the tandem 7 residue repeats in the C-terminal domain (CTD) of the largest RNA polymerase II subunit POLR2A. Negatively regulates RNA polymerase II transcription, possibly by controlling the transition from initiation/capping to processive transcript elongation. Recruited by REST to neuronal genes that contain RE-1 elements, leading to neuronal gene silencing in non-neuronal cells. In Homo sapiens (Human), this protein is Carboxy-terminal domain RNA polymerase II polypeptide A small phosphatase 1 (CTDSP1).